A 388-amino-acid polypeptide reads, in one-letter code: Alpha-2A adrenergic receptor (388 aa).

Topologically, residues 1 to 22 are extracellular; the sequence is MICGANATNGTNATKEYTLLVA. 3 N-linked (GlcNAc...) asparagine glycosylation sites follow: Asn-6, Asn-9, and Asn-12. Residues 23–48 form a helical membrane-spanning segment; it reads LPLSIAVGLLILLIIFGNVLVIIAVF. Residues 49 to 59 are Cytoplasmic-facing; that stretch reads TSRALRAPQNL. The chain crosses the membrane as a helical span at residues 60–85; it reads FLVSLASADILVATLVMPFSLANELM. Over 86 to 95 the chain is Extracellular; it reads GMWTFGGVWC. Cys-95 and Cys-169 are oxidised to a cystine. The chain crosses the membrane as a helical span at residues 96–118; it reads EIYLALDVLFCTASITHLCAISL. At 119 to 138 the chain is on the cytoplasmic side; the sequence is DRYWSITQAIEYNLKRTPQR. The helical transmembrane segment at 139-162 threads the bilayer; it reads IKRIIFIVWIIAAVISCPPLITMK. At 163–173 the chain is on the extracellular side; sequence KSEGDICDINK. Residues 174–198 form a helical membrane-spanning segment; sequence EKWYIVSSCIGSFFLPCIIMVLVYI. Topologically, residues 199–311 are cytoplasmic; the sequence is RIYQIAKKRT…RQNREKRFTF (113 aa). Residues 208–291 form a disordered region; the sequence is TRAPPGDHRK…PGDGDKTEAC (84 aa). Positions 212–231 are enriched in basic and acidic residues; it reads PGDHRKNEVGKKENDPHEKL. The span at 266–275 shows a compositional bias: basic residues; it reads LKKKSSKGKT. A helical membrane pass occupies residues 312–337; the sequence is VLAVVIGVFVICWFPFFFTYTFTAFC. At 338 to 344 the chain is on the extracellular side; that stretch reads DCCVPET. Residues 345 to 368 form a helical membrane-spanning segment; the sequence is LFKFFFWFGYCNSSLNPIIYTIFN. Topologically, residues 369–388 are cytoplasmic; that stretch reads NDFRRSFKKILCRRDKRRVV. Cys-380 carries the S-palmitoyl cysteine lipid modification.

This sequence belongs to the G-protein coupled receptor 1 family. Adrenergic receptor subfamily. ADRA2A sub-subfamily.

The protein resides in the cell membrane. Alpha-2 adrenergic receptors mediate the catecholamine-induced inhibition of adenylate cyclase through the action of G proteins. The order of potency for this receptor is dexmedetomidine &gt; oxymetazoline = epinephrine &gt; norepinephrine. This chain is Alpha-2A adrenergic receptor, found in Danio rerio (Zebrafish).